The primary structure comprises 144 residues: Alpha-crystallin (144 aa).

The sHSP domain occupies 33-143 (PTFDTRLMRL…TEKHIQIRST (111 aa)).

This sequence belongs to the small heat shock protein (HSP20) family.

It localises to the secreted. It is found in the cell wall. Its subcellular location is the cytoplasm. Its function is as follows. Acts as a chaperone. This chain is Alpha-crystallin (hspX), found in Mycobacterium bovis (strain ATCC BAA-935 / AF2122/97).